The primary structure comprises 226 residues: NADH-quinone oxidoreductase subunit C (226 aa).

The segment at M1 to G21 is disordered.

This sequence belongs to the complex I 30 kDa subunit family. In terms of assembly, NDH-1 is composed of 14 different subunits. Subunits NuoB, C, D, E, F, and G constitute the peripheral sector of the complex.

The protein resides in the cell membrane. It carries out the reaction a quinone + NADH + 5 H(+)(in) = a quinol + NAD(+) + 4 H(+)(out). Its function is as follows. NDH-1 shuttles electrons from NADH, via FMN and iron-sulfur (Fe-S) centers, to quinones in the respiratory chain. The immediate electron acceptor for the enzyme in this species is believed to be a menaquinone. Couples the redox reaction to proton translocation (for every two electrons transferred, four hydrogen ions are translocated across the cytoplasmic membrane), and thus conserves the redox energy in a proton gradient. This is NADH-quinone oxidoreductase subunit C from Mycolicibacterium gilvum (strain PYR-GCK) (Mycobacterium gilvum (strain PYR-GCK)).